The chain runs to 1866 residues: Rho GTPase-activating protein 100F (1866 aa).

3 disordered regions span residues 22–98 (MLCC…AGVK), 262–336 (RRGN…NNYS), and 466–530 (LRSS…DTEA). The segment covering 59-77 (GNQQHHGNQQHHGNQQQHH) has biased composition (low complexity). Residues 179 to 264 (LVEIVKRPGQ…LVLAIRQRRG (86 aa)) enclose the PDZ domain. Positions 271–286 (PGPPTLSRPEQKPPPV) are enriched in pro residues. The segment covering 301-326 (TDRMPRPRSSRDRRTGDGREMTESRS) has biased composition (basic and acidic residues). Ser719 is modified (phosphoserine). Residues 745-775 (AGPASPSGSILSTGGHQSPAPTPSATLPRPH) are disordered. Residues 750–760 (PSGSILSTGGH) are compositionally biased toward polar residues. The C2 domain occupies 789–908 (KLDKPIVDIG…LRQSPLHQLA (120 aa)). Residues 948 to 1148 (ADLETVVNRE…YLLQIWPQPQ (201 aa)) form the Rho-GAP domain. Disordered stretches follow at residues 1273–1328 (GGSV…QVKI), 1356–1380 (PTTQADTESTLGCKESNGTASRRGN), 1393–1479 (SVVN…DLVS), 1514–1607 (FTPI…MVST), 1644–1727 (YTND…YGTL), and 1819–1840 (DEKPGSNGGNAHGEEKLGADKG). Residues 1282–1292 (DPSPLPLPGTP) are compositionally biased toward pro residues. The segment covering 1293-1302 (SPGSSSASTG) has biased composition (low complexity). 3 stretches are compositionally biased toward polar residues: residues 1356–1377 (PTTQADTESTLGCKESNGTASR), 1393–1408 (SVVNEESSYSSKYTGS), and 1416–1429 (GNSSYTPSKANASG). Over residues 1443-1479 (SSATSSSSSSQATVLSAGSTATSAPTTSSDDSDDLVS) the composition is skewed to low complexity. The segment covering 1538 to 1587 (QLVTPISGSSSKPGATTGAISKYTTGSVESSINANSQKLSSPSRLCNSKD) has biased composition (polar residues). 2 stretches are compositionally biased toward low complexity: residues 1590–1607 (SRTGTASSTTPATSMVST) and 1644–1658 (YTNDTKNSGSSSSKS). The segment covering 1659-1670 (GIGGGSGTGLGA) has biased composition (gly residues). Composition is skewed to low complexity over residues 1671 to 1688 (VSGASSETRSFGSTLFGS) and 1696 to 1720 (GSSHNHSSASPSPFTTTNGNGNHNT). The segment covering 1830–1839 (HGEEKLGADK) has biased composition (basic and acidic residues).

In terms of assembly, interacts (via PDZ domain) with Nrx-1; may recruit Nrx-1 to the presynaptic active zone.

It localises to the presynapse. Functionally, GTPase activator for the Rho-type GTPases by converting them to an inactive GDP-bound state. Promotes the anchoring of Liprin-alpha clusters at synapses. Recruits and keeps Nrx-1 levels high in active zones in the presynapse opposite the postsynaptic region. This Drosophila melanogaster (Fruit fly) protein is Rho GTPase-activating protein 100F (RhoGAP100F).